The sequence spans 156 residues: ATP synthase subunit b 1 (156 aa).

The helical transmembrane segment at leucine 7 to proline 27 threads the bilayer.

It belongs to the ATPase B chain family. As to quaternary structure, F-type ATPases have 2 components, F(1) - the catalytic core - and F(0) - the membrane proton channel. F(1) has five subunits: alpha(3), beta(3), gamma(1), delta(1), epsilon(1). F(0) has three main subunits: a(1), b(2) and c(10-14). The alpha and beta chains form an alternating ring which encloses part of the gamma chain. F(1) is attached to F(0) by a central stalk formed by the gamma and epsilon chains, while a peripheral stalk is formed by the delta and b chains.

Its subcellular location is the cell inner membrane. In terms of biological role, f(1)F(0) ATP synthase produces ATP from ADP in the presence of a proton or sodium gradient. F-type ATPases consist of two structural domains, F(1) containing the extramembraneous catalytic core and F(0) containing the membrane proton channel, linked together by a central stalk and a peripheral stalk. During catalysis, ATP synthesis in the catalytic domain of F(1) is coupled via a rotary mechanism of the central stalk subunits to proton translocation. Functionally, component of the F(0) channel, it forms part of the peripheral stalk, linking F(1) to F(0). This Albidiferax ferrireducens (strain ATCC BAA-621 / DSM 15236 / T118) (Rhodoferax ferrireducens) protein is ATP synthase subunit b 1.